We begin with the raw amino-acid sequence, 186 residues long: MKKTLSIHSVRKDLILGSRRLSNYWWATIIFIGALGFLLAGLSSYFQVDLLPFTNSTDLVFIPQGIVMTFYGSIGVFLSLFLWLTIIWNIGAGYNEFNKDKGIVKIFRLGFPGKNRKICLQFNIKEIKSIKIDIKEGLNPRREIYLCTKDKRVIPLTRVGQPLLLSEVEEQAAEIARFLDVVLEGA.

Transmembrane regions (helical) follow at residues W26 to F46 and I66 to I86.

It belongs to the Ycf4 family.

It is found in the plastid. It localises to the chloroplast thylakoid membrane. Its function is as follows. Seems to be required for the assembly of the photosystem I complex. The polypeptide is Photosystem I assembly protein Ycf4 (Pyropia yezoensis (Susabi-nori)).